The primary structure comprises 345 residues: Heat-inducible transcription repressor HrcA (345 aa).

The protein belongs to the HrcA family.

Functionally, negative regulator of class I heat shock genes (grpE-dnaK-dnaJ and groELS operons). Prevents heat-shock induction of these operons. This chain is Heat-inducible transcription repressor HrcA, found in Zymomonas mobilis subsp. mobilis (strain ATCC 31821 / ZM4 / CP4).